Reading from the N-terminus, the 399-residue chain is Pre-mycofactocin synthase (399 aa).

Positions 4–386 (ARDIWFETVA…VPEDILVPEG (383 aa)) constitute an FMN hydroxy acid dehydrogenase domain. The FMN site is built by S111 and Q131. Position 133 (Y133) interacts with a 2-oxocarboxylate. T159 serves as a coordination point for FMN. R168 contributes to the a 2-oxocarboxylate binding site. Residue K257 coordinates FMN. The active-site Proton acceptor is the H281. Residues 312-316 (DGGIR) and 335-336 (GR) contribute to the FMN site.

The protein belongs to the FMN-dependent alpha-hydroxy acid dehydrogenase family. The cofactor is FMN.

It catalyses the reaction 3-amino-5-[(4-hydroxyphenyl)methyl]-4,4-dimethyl-2-pyrrolidin-2-one + O2 + H2O = pre-mycofactocin + H2O2 + NH4(+). Functionally, involved in the biosynthesis of the enzyme cofactor mycofactocin (MFT). Catalyzes the oxidative deamination of AHDP (3-amino-5-[(4-hydroxyphenyl)methyl]-4,4-dimethyl-2-pyrrolidin-2-one), forming an alpha-keto amide moiety on the resulting molecule, which is called pre-mycofactocin (PMFT). This reaction occurs via a 5-[(4-hydroxyphenyl)methyl]-3-imino-4,4-dimethylpyrrolidin-2-one intermediate, which converts to PMFT. The alpha-keto amide moiety is the redox-active center for the redox activity of mycofactocin. Is required for the in vivo ethanol assimilation in M.smegmatis. The sequence is that of Pre-mycofactocin synthase from Mycolicibacterium smegmatis (strain ATCC 700084 / mc(2)155) (Mycobacterium smegmatis).